A 424-amino-acid chain; its full sequence is FeMo cofactor biosynthesis protein NifB (424 aa).

Positions 12–261 constitute a Radical SAM core domain; sequence NDSSRHTYGR…PQMKHCARCR (250 aa). [4Fe-4S] cluster-binding residues include Cys-30, Cys-34, and Cys-37. Positions 84, 136, and 188 each coordinate S-adenosyl-L-methionine. Residues Cys-257 and Cys-260 each coordinate [4Fe-4S] cluster.

It belongs to the radical SAM superfamily. NifB family. In terms of assembly, monomer. It depends on [4Fe-4S] cluster as a cofactor.

It functions in the pathway cofactor biosynthesis; Fe-Mo cofactor biosynthesis. Its function is as follows. Involved in the biosynthesis of the iron-molybdenum cofactor (FeMo-co or M-cluster) found in the dinitrogenase enzyme of the nitrogenase complex in nitrogen-fixing microorganisms. NifB catalyzes the crucial step of radical SAM-dependent carbide insertion that occurs concomitant with the insertion of a 9th sulfur and the rearrangement/coupling of two [4Fe-4S] clusters into a [8Fe-9S-C] cluster, the precursor to the M-cluster. This chain is FeMo cofactor biosynthesis protein NifB, found in Chlorobaculum tepidum (strain ATCC 49652 / DSM 12025 / NBRC 103806 / TLS) (Chlorobium tepidum).